The sequence spans 161 residues: EKWELDLDIEEVFIHPNYTKSTTDNDIALLRLAQPATLSQTIVPICLPDSGLAERELTQAGQETLVTGWGYHSSREKEAKRNRTFILNFIKIPVVPRNECSEVMSNMVSENMLCAGILGDRQDACEGDSGGPMVASFHGTWFLVGLVSWGEGCGLLHNYGV.

In terms of domain architecture, Peptidase S1 spans 1-161; the sequence is EKWELDLDIE…GCGLLHNYGV (161 aa). A glycan (N-linked (GlcNAc...) asparagine) is linked at N17. D26 acts as the Charge relay system in catalysis. N-linked (GlcNAc...) asparagine glycosylation occurs at N82. 2 disulfide bridges follow: C100–C114 and C125–C153. The active-site Charge relay system is S129.

This sequence belongs to the peptidase S1 family. As to expression, plasma; synthesized in the liver.

Its subcellular location is the secreted. It localises to the golgi apparatus. It is found in the endoplasmic reticulum. The enzyme catalyses Degradation of blood coagulation factors Va and VIIIa.. In terms of biological role, protein C is a vitamin K-dependent serine protease that regulates blood coagulation by inactivating factors Va and VIIIa in the presence of calcium ions and phospholipids. Exerts a protective effect on the endothelial cell barrier function. The polypeptide is Vitamin K-dependent protein C (PROC) (Macaca mulatta (Rhesus macaque)).